The sequence spans 150 residues: 3-dehydroquinate dehydratase (150 aa).

Catalysis depends on Tyr-26, which acts as the Proton acceptor. The substrate site is built by Asn-77, His-83, and Asp-90. His-103 (proton donor) is an active-site residue. Substrate-binding positions include Leu-104 to Ser-105 and Arg-114.

Belongs to the type-II 3-dehydroquinase family. As to quaternary structure, homododecamer.

The enzyme catalyses 3-dehydroquinate = 3-dehydroshikimate + H2O. The protein operates within metabolic intermediate biosynthesis; chorismate biosynthesis; chorismate from D-erythrose 4-phosphate and phosphoenolpyruvate: step 3/7. Functionally, catalyzes a trans-dehydration via an enolate intermediate. This is 3-dehydroquinate dehydratase from Enterobacter sp. (strain 638).